Here is a 127-residue protein sequence, read N- to C-terminus: Large ribosomal subunit protein uL18 (127 aa).

A disordered region spans residues M1–R26. Residues A17–R26 are compositionally biased toward basic residues.

Belongs to the universal ribosomal protein uL18 family. Part of the 50S ribosomal subunit; part of the 5S rRNA/L5/L18/L25 subcomplex. Contacts the 5S and 23S rRNAs.

Functionally, this is one of the proteins that bind and probably mediate the attachment of the 5S RNA into the large ribosomal subunit, where it forms part of the central protuberance. The chain is Large ribosomal subunit protein uL18 from Cutibacterium acnes (strain DSM 16379 / KPA171202) (Propionibacterium acnes).